Consider the following 1758-residue polypeptide: RanBP2-like and GRIP domain-containing protein 4 (1758 aa).

Position 21 is a phosphoserine (serine 21). 2 TPR repeats span residues 60–93 (PRAH…NPTQ) and 584–617 (QKMG…LKII). Positions 761-805 (DPLYKNGSLRNADSEIKHSTPSPTKYSLSPSKSYKYSPKTPPRWA) are disordered. A compositionally biased stretch (low complexity) spans 779 to 798 (STPSPTKYSLSPSKSYKYSP). Residues 1037–1173 (HFEPVVQMPE…FEECQQLLLD (137 aa)) enclose the RanBD1 1 domain. Disordered stretches follow at residues 1213–1249 (QTKV…TLEW) and 1295–1332 (SFKS…ERDG). Over residues 1236-1245 (IKPNPENTGP) the composition is skewed to polar residues. A compositionally biased stretch (low complexity) spans 1295-1309 (SFKSALSPSKSPAKL). Positions 1318 to 1330 (TDEESDVTQEEER) are enriched in acidic residues. The RanBD1 2 domain occupies 1334–1470 (YFEPVVPLPD…FDEAKTAQEK (137 aa)). The segment covering 1583–1594 (SETSSVAQSGSE) has biased composition (polar residues). A disordered region spans residues 1583-1621 (SETSSVAQSGSESKVEPKKCELSKNSDIEQSSDSKVKNL). The span at 1595–1618 (SKVEPKKCELSKNSDIEQSSDSKV) shows a compositional bias: basic and acidic residues. The region spanning 1703–1753 (QEESAANVEHLKNVLLQFIFLKPGSERERLLPVINTMLQLSPEEKGKLAAV) is the GRIP domain.

This is RanBP2-like and GRIP domain-containing protein 4 (RGPD4) from Homo sapiens (Human).